A 431-amino-acid polypeptide reads, in one-letter code: Intraflagellar transport protein 38 (431 aa).

Residues 177 to 218 (SAAVQQRIKNLAAECNTLQEEVTTNKREKAKLEEQITQKKQS) are a coiled coil. The disordered stretch occupies residues 346-431 (INTNAEIPDD…EELDPDNIEF (86 aa)). A compositionally biased stretch (acidic residues) spans 352–370 (IPDDESYSYSYEEEEEEEQ). The span at 384-405 (PETHSNGEKHRGLDELSHKSNE) shows a compositional bias: basic and acidic residues. The segment covering 420–431 (GGEELDPDNIEF) has biased composition (acidic residues).

It belongs to the CLUAP1 family.

The protein resides in the cell projection. It is found in the cilium. Its subcellular location is the flagellum. It localises to the cytoplasm. The protein localises to the cytoskeleton. The protein resides in the flagellum axoneme. It is found in the flagellum basal body. In terms of biological role, component of the intraflagellar transport complex B (IFT-B) involved in flagellar assembly. The sequence is that of Intraflagellar transport protein 38 from Giardia intestinalis (strain ATCC 50803 / WB clone C6) (Giardia lamblia).